The primary structure comprises 128 residues: Fluoride-specific ion channel FluC (128 aa).

4 helical membrane passes run 3 to 23, 34 to 54, 65 to 85, and 102 to 122; these read FTTIFYIGFGGALGAILRSFT, LSFPLGTLSVNIIGGFFIGFL, INLKSFLVTGFLGGLTTFSTF, and FLNIASNLLLSLLFCYFGFWI. Na(+) is bound by residues glycine 77 and threonine 80.

It belongs to the fluoride channel Fluc/FEX (TC 1.A.43) family.

It localises to the cell inner membrane. The enzyme catalyses fluoride(in) = fluoride(out). Its activity is regulated as follows. Na(+) is not transported, but it plays an essential structural role and its presence is essential for fluoride channel function. Functionally, fluoride-specific ion channel. Important for reducing fluoride concentration in the cell, thus reducing its toxicity. This is Fluoride-specific ion channel FluC from Campylobacter fetus subsp. fetus (strain 82-40).